Here is a 296-residue protein sequence, read N- to C-terminus: Coatomer subunit epsilon (296 aa).

It belongs to the COPE family. As to quaternary structure, oligomeric complex that consists of at least the alpha, beta, beta', gamma, delta, epsilon and zeta subunits. Interacts with the ESCRT-0 subunit VPS27.

The protein resides in the cytoplasm. Its subcellular location is the golgi apparatus membrane. The protein localises to the cytoplasmic vesicle. It localises to the COPI-coated vesicle membrane. Functionally, the coatomer is a cytosolic protein complex that binds to dilysine motifs and reversibly associates with Golgi non-clathrin-coated vesicles, which further mediate biosynthetic protein transport from the ER, via the Golgi up to the trans Golgi network. The coatomer complex is required for budding from Golgi membranes, and is essential for the retrograde Golgi-to-ER transport of dilysine-tagged proteins. The protein is Coatomer subunit epsilon (SEC28) of Saccharomyces cerevisiae (strain ATCC 204508 / S288c) (Baker's yeast).